The chain runs to 338 residues: Elongation factor Ts, mitochondrial (338 aa).

The transit peptide at 1-55 (MSLLRSLRLCLVARTGSCPLSALGPGPLLPSLQAGLPLLQSPQQWHTFHSGSWLS) directs the protein to the mitochondrion. K89, K146, and K205 each carry N6-succinyllysine. Phosphoserine is present on S283.

Belongs to the EF-Ts family.

It localises to the mitochondrion. Its function is as follows. Associates with the EF-Tu.GDP complex and induces the exchange of GDP to GTP. It remains bound to the aminoacyl-tRNA.EF-Tu.GTP complex up to the GTP hydrolysis stage on the ribosome. The protein is Elongation factor Ts, mitochondrial of Bos taurus (Bovine).